The chain runs to 340 residues: Functional amyloid subunit FapC (340 aa).

An N-terminal signal peptide occupies residues 1-24 (MKATMVLTPLALAMAAVLSVSAYA). The FapC_R1 repeat unit spans residues 67 to 100 (NNASVSGSIKDASGNVGVNVAAGDNNQQANAAAL). The linker 1 stretch occupies residues 101–133 (ASADASFVFGTATASTSVLQSGYGNTLNNYSNP). Residues 134–167 (NTASLSNSANNVSGNLGVNVAAGNFNQQKNDLAA) form a FapC_R2 repeat. The segment at 168 to 290 (AVSNGQYSTA…AIVGFKTPVT (123 aa)) is linker 2. Residues 291 to 324 (NNASLSNSLQNVSGNVGVNIAAGGGNQQSNSLSI) form a FapC_R3 repeat. The Cys-X-X-Cys signature appears at 328 to 331 (CSSC).

It belongs to the FapB/FapC family. As to quaternary structure, the major component of purified amyloid fibrils. Fibrils are resistant to boiling in 2% (weight/vol) SDS and require &gt;90% (vol/vol) formic acid to dissolve. Interacts with FapA in vitro.

The protein resides in the fimbrium. It is found in the secreted. Functionally, the major functional amyloid subunit in this bacterium. Upon overexpression of the endogenous six-gene locus (fapA-fapF), cells form large clumps during liquid growth, make large amounts of biofilm and produce amyloid fibrils. The protein is Functional amyloid subunit FapC of Pseudomonas aeruginosa (strain ATCC 15692 / DSM 22644 / CIP 104116 / JCM 14847 / LMG 12228 / 1C / PRS 101 / PAO1).